We begin with the raw amino-acid sequence, 328 residues long: 6-phosphogluconolactonase (328 aa).

The protein belongs to the cycloisomerase 2 family.

The enzyme catalyses 6-phospho-D-glucono-1,5-lactone + H2O = 6-phospho-D-gluconate + H(+). Its pathway is carbohydrate degradation; pentose phosphate pathway; D-ribulose 5-phosphate from D-glucose 6-phosphate (oxidative stage): step 2/3. Catalyzes the hydrolysis of 6-phosphogluconolactone to 6-phosphogluconate. This chain is 6-phosphogluconolactonase, found in Xenorhabdus nematophila (strain ATCC 19061 / DSM 3370 / CCUG 14189 / LMG 1036 / NCIMB 9965 / AN6).